The primary structure comprises 172 residues: 6,7-dimethyl-8-ribityllumazine synthase (172 aa).

5-amino-6-(D-ribitylamino)uracil is bound by residues Phe24, 58–60 (ALE), and 82–84 (AVI). 87 to 88 (ET) serves as a coordination point for (2S)-2-hydroxy-3-oxobutyl phosphate. His90 (proton donor) is an active-site residue. A 5-amino-6-(D-ribitylamino)uracil-binding site is contributed by Asn115. Arg129 is a (2S)-2-hydroxy-3-oxobutyl phosphate binding site. Residues 150–172 (ALEQLDGDEDDEGEGEDDEEERA) are disordered. Over residues 154–172 (LDGDEDDEGEGEDDEEERA) the composition is skewed to acidic residues.

Belongs to the DMRL synthase family.

The enzyme catalyses (2S)-2-hydroxy-3-oxobutyl phosphate + 5-amino-6-(D-ribitylamino)uracil = 6,7-dimethyl-8-(1-D-ribityl)lumazine + phosphate + 2 H2O + H(+). The protein operates within cofactor biosynthesis; riboflavin biosynthesis; riboflavin from 2-hydroxy-3-oxobutyl phosphate and 5-amino-6-(D-ribitylamino)uracil: step 1/2. Functionally, catalyzes the formation of 6,7-dimethyl-8-ribityllumazine by condensation of 5-amino-6-(D-ribitylamino)uracil with 3,4-dihydroxy-2-butanone 4-phosphate. This is the penultimate step in the biosynthesis of riboflavin. This chain is 6,7-dimethyl-8-ribityllumazine synthase, found in Paraburkholderia phymatum (strain DSM 17167 / CIP 108236 / LMG 21445 / STM815) (Burkholderia phymatum).